Reading from the N-terminus, the 364-residue chain is D-alanine--D-alanine ligase (364 aa).

The region spanning Lys134–Thr344 is the ATP-grasp domain. Residue Asn167–Glu222 participates in ATP binding. Residues Asp297, Glu311, and Asn313 each contribute to the Mg(2+) site.

It belongs to the D-alanine--D-alanine ligase family. It depends on Mg(2+) as a cofactor. Requires Mn(2+) as cofactor.

The protein localises to the cytoplasm. The enzyme catalyses 2 D-alanine + ATP = D-alanyl-D-alanine + ADP + phosphate + H(+). It functions in the pathway cell wall biogenesis; peptidoglycan biosynthesis. Its function is as follows. Cell wall formation. The chain is D-alanine--D-alanine ligase from Borrelia recurrentis (strain A1).